The chain runs to 248 residues: PF03932 family protein CutC (248 aa).

Belongs to the CutC family. In terms of assembly, homodimer.

The protein localises to the cytoplasm. The polypeptide is PF03932 family protein CutC (Escherichia coli O81 (strain ED1a)).